An 807-amino-acid chain; its full sequence is Glycerol-3-phosphate acyltransferase (807 aa).

The HXXXXD motif motif lies at 305 to 310; that stretch reads CHRSHM.

This sequence belongs to the GPAT/DAPAT family.

The protein localises to the cell inner membrane. The enzyme catalyses sn-glycerol 3-phosphate + an acyl-CoA = a 1-acyl-sn-glycero-3-phosphate + CoA. The protein operates within phospholipid metabolism; CDP-diacylglycerol biosynthesis; CDP-diacylglycerol from sn-glycerol 3-phosphate: step 1/3. The sequence is that of Glycerol-3-phosphate acyltransferase from Vibrio atlanticus (strain LGP32) (Vibrio splendidus (strain Mel32)).